Consider the following 222-residue polypeptide: Coiled-coil domain-containing protein 70 (222 aa).

Coiled-coil stretches lie at residues Leu34 to Arg62 and Asn129 to Trp188.

The protein is Coiled-coil domain-containing protein 70 (CCDC70) of Bos taurus (Bovine).